A 649-amino-acid chain; its full sequence is Acetyl-coenzyme A synthetase (649 aa).

CoA-binding positions include 190 to 193 and T310; that span reads RGGR. ATP-binding positions include 386 to 388, 410 to 415, D499, and R514; these read GEP and DTWWQT. S522 contributes to the CoA binding site. Position 525 (R525) interacts with ATP. Residues V536, H538, and V541 each contribute to the Mg(2+) site. R583 serves as a coordination point for CoA. Residue K608 is modified to N6-acetyllysine.

The protein belongs to the ATP-dependent AMP-binding enzyme family. The cofactor is Mg(2+). In terms of processing, acetylated. Deacetylation by the SIR2-homolog deacetylase activates the enzyme.

It carries out the reaction acetate + ATP + CoA = acetyl-CoA + AMP + diphosphate. Functionally, catalyzes the conversion of acetate into acetyl-CoA (AcCoA), an essential intermediate at the junction of anabolic and catabolic pathways. AcsA undergoes a two-step reaction. In the first half reaction, AcsA combines acetate with ATP to form acetyl-adenylate (AcAMP) intermediate. In the second half reaction, it can then transfer the acetyl group from AcAMP to the sulfhydryl group of CoA, forming the product AcCoA. This Methylorubrum populi (strain ATCC BAA-705 / NCIMB 13946 / BJ001) (Methylobacterium populi) protein is Acetyl-coenzyme A synthetase.